The sequence spans 283 residues: MKHSFSRLFGLGDKEEEAEIAEHDTNKEEIQEIPVGDIIPNRFQPRTIFSEEKIKELAATIHTHGIIQPIVVRKTEREGQYELIAGERRWRAVQTLDWEKVPAIIKDFSDTETASVALIENLQREELSSIEEAHAYARLLELHDLTQEALAQRLGKGQSTIANKLRLLKLPEEVQEAILKKEISERHARALIPLKQPDLQVKLLHEVIEKSLNVKQTEDRVVKMLEQDKRKPKPKRKAYSRDARIAMNTIRQSLSMVEDSGVKLNTEEEEFEEYIQFTIRIPK.

Positions 148 to 167 form a DNA-binding region, H-T-H motif; that stretch reads EALAQRLGKGQSTIANKLRL.

It belongs to the ParB family.

It localises to the cytoplasm. It is found in the nucleoid. Its function is as follows. Effects nucleoid occlusion by binding relatively nonspecifically to DNA and preventing the assembly of the division machinery in the vicinity of the nucleoid, especially under conditions that disturb the cell cycle. It helps to coordinate cell division and chromosome segregation by preventing the formation of the Z ring through the nucleoid, which would cause chromosome breakage. This Bacillus licheniformis (strain ATCC 14580 / DSM 13 / JCM 2505 / CCUG 7422 / NBRC 12200 / NCIMB 9375 / NCTC 10341 / NRRL NRS-1264 / Gibson 46) protein is Nucleoid occlusion protein.